The sequence spans 84 residues: Subtilisin-chymotrypsin inhibitor-2A (84 aa).

The interval 1–23 (MSSVEKKPEGVNTGAGDRHNLKT) is disordered.

The protein belongs to the protease inhibitor I13 (potato type I serine protease inhibitor) family.

In terms of biological role, inhibits both subtilisin and chymotrypsin. The chain is Subtilisin-chymotrypsin inhibitor-2A from Hordeum vulgare (Barley).